We begin with the raw amino-acid sequence, 549 residues long: Sorting nexin-33 (549 aa).

One can recognise an SH3 domain in the interval 1 to 61 (MALKARALYS…PASYVEILRP (61 aa)). The segment covering 66–83 (VQVDYSGHTQGYTDSPHQ) has biased composition (polar residues). The disordered stretch occupies residues 66 to 137 (VQVDYSGHTQ…RPEYTHRPRP (72 aa)). Residues 86-101 (YDDDEEDDDDWDDWDD) show a composition bias toward acidic residues. A compositionally biased stretch (polar residues) spans 110 to 119 (SGSNGVSRSQ). The segment covering 127–137 (PRPEYTHRPRP) has biased composition (basic and acidic residues). Residues 205–315 (FSCSVEEPTK…HFLSCQDEKQ (111 aa)) enclose the PX domain. The BAR domain maps to 346 to 549 (LQDVEERVDV…EKTLHMYDDL (204 aa)).

Belongs to the sorting nexin family.

The protein resides in the cytoplasm. It localises to the cytosol. The protein localises to the membrane. It is found in the cytoplasmic vesicle membrane. Functionally, plays a role in the reorganization of the cytoskeleton, endocytosis and cellular vesicle trafficking, both during interphase and at the end of mitotic cell divisions. Required for efficient progress through mitosis and cytokinesis. Required for normal formation of the cleavage furrow at the end of mitosis. Modulates endocytosis of cell-surface proteins. Promotes membrane tubulation (in vitro). May promote the formation of macropinosomes. The protein is Sorting nexin-33 (snx33) of Xenopus tropicalis (Western clawed frog).